Reading from the N-terminus, the 216-residue chain is Large ribosomal subunit protein bL21 (216 aa).

This sequence belongs to the bacterial ribosomal protein bL21 family. Part of the 50S ribosomal subunit. Contacts protein L20.

Functionally, this protein binds to 23S rRNA in the presence of protein L20. This chain is Large ribosomal subunit protein bL21, found in Roseobacter denitrificans (strain ATCC 33942 / OCh 114) (Erythrobacter sp. (strain OCh 114)).